A 212-amino-acid polypeptide reads, in one-letter code: MLYDFERTAPEPQGLGLVPMVVEQSGRGERAYDIYSRLLKERVIFLVGPVNDATANLIVAQMLFLESENPDKDIYLYINSPGGSVSAGLAIYDTMQFIKPDVSTLCIGQAASMGAFLLTAGAKGKRYCLPNSRVMIHQPLGGFQGQASDIEIHAKEILYLKARLNGMLAKHTGQSLEVIDRDTDRDNFMSAEDSVKYGLVDKVLTSRNEAGN.

S112 (nucleophile) is an active-site residue. H137 is an active-site residue.

The protein belongs to the peptidase S14 family. In terms of assembly, fourteen ClpP subunits assemble into 2 heptameric rings which stack back to back to give a disk-like structure with a central cavity, resembling the structure of eukaryotic proteasomes.

Its subcellular location is the cytoplasm. The enzyme catalyses Hydrolysis of proteins to small peptides in the presence of ATP and magnesium. alpha-casein is the usual test substrate. In the absence of ATP, only oligopeptides shorter than five residues are hydrolyzed (such as succinyl-Leu-Tyr-|-NHMec, and Leu-Tyr-Leu-|-Tyr-Trp, in which cleavage of the -Tyr-|-Leu- and -Tyr-|-Trp bonds also occurs).. Cleaves peptides in various proteins in a process that requires ATP hydrolysis. Has a chymotrypsin-like activity. Plays a major role in the degradation of misfolded proteins. The chain is ATP-dependent Clp protease proteolytic subunit from Thiobacillus denitrificans (strain ATCC 25259 / T1).